Reading from the N-terminus, the 245-residue chain is Uridylate kinase (245 aa).

Residue 18 to 21 (KLSG) coordinates ATP. Gly60 provides a ligand contact to UMP. ATP contacts are provided by Gly61 and Arg65. UMP-binding positions include Asp80 and 141–148 (TGNPFFTT). 3 residues coordinate ATP: Thr168, Tyr174, and Asp177.

It belongs to the UMP kinase family. In terms of assembly, homohexamer.

Its subcellular location is the cytoplasm. It carries out the reaction UMP + ATP = UDP + ADP. Its pathway is pyrimidine metabolism; CTP biosynthesis via de novo pathway; UDP from UMP (UMPK route): step 1/1. Inhibited by UTP. In terms of biological role, catalyzes the reversible phosphorylation of UMP to UDP. The sequence is that of Uridylate kinase from Pseudomonas paraeruginosa (strain DSM 24068 / PA7) (Pseudomonas aeruginosa (strain PA7)).